The sequence spans 1368 residues: Protein suppressor 2 of zeste (1368 aa).

Residues 35 to 74 (CRLCRGYMIDPTTVDYCYHTYCRSCILKHLLRAVYCPECK) form an RING-type zinc finger. 10 disordered regions span residues 245-321 (SRIN…FKSL), 448-628 (QPLQ…QQQQ), 640-718 (TLPT…AVPQ), 861-903 (AGGK…KRSC), 935-1001 (ALSG…NGTA), 1057-1103 (SANP…STSN), 1116-1141 (ISANSNGGPSTTSGSNSNGTTNGDDL), 1161-1193 (AASSGNGSGSTSSSSAKPKNANALVRPQNASVR), 1211-1271 (STAA…KKPT), and 1298-1322 (VLSSNAAKSPELAKTTTAVALRPEP). Residues 449–461 (PLQQSASNPDSKY) show a composition bias toward polar residues. The span at 462–495 (SPNASPMSSCSSSTNGSSSSLGTADASTSTSTSS) shows a compositional bias: low complexity. Residues 496 to 506 (SHRKRKKKHSK) show a composition bias toward basic residues. Low complexity-rich tracts occupy residues 599 to 628 (AEPEQQQQQQQQQQQPQQQQQQQQQQQQQQ) and 672 to 689 (PKQQQQQMPQQPQAVLQQ). Polar residues-rich tracts occupy residues 936-953 (LSGQRNNKGNSSNSNAYR) and 962-977 (LRNTAAPQHSFPSKSS). Composition is skewed to low complexity over residues 1078–1099 (NNNNNNNNNNNNNNNNNNNNNN), 1119–1138 (NSNGGPSTTSGSNSNGTTNG), 1161–1183 (AASSGNGSGSTSSSSAKPKNANA), and 1231–1263 (STSNPGSLSPTNTSSSSSSSSSGSSGCSAATSP).

The protein localises to the nucleus. Its function is as follows. Regulates expression of the homeotic selector genes by influencing higher-order chromatin structure through interaction with other proteins. In Drosophila melanogaster (Fruit fly), this protein is Protein suppressor 2 of zeste (Su(z)2).